The following is a 673-amino-acid chain: Ribonucleoprotein PTB-binding 2 (673 aa).

The segment covering 1 to 17 (MAARGGGAGGAGSGSGP) has biased composition (gly residues). Positions 1–34 (MAARGGGAGGAGSGSGPSAGTAGEAAEPALRPGE) are disordered. Residues 18–29 (SAGTAGEAAEPA) show a composition bias toward low complexity. 3 consecutive RRM domains span residues 58 to 129 (RKIL…LQPT), 131 to 209 (ALLC…WMDV), and 220 to 298 (KCLC…FCAP). A disordered region spans residues 481 to 549 (QLPAGQAGPG…KGTEVASKNQ (69 aa)). Over residues 499–512 (SASVSISEASFSGS) the composition is skewed to low complexity. Positions 529–549 (TGNQKTPQSQPKGTEVASKNQ) are enriched in polar residues.

In terms of assembly, interacts with PTBP1 and RAVER1. In terms of tissue distribution, expressed throughout embryogenesis. Detected at low levels in adult lung, brain and kidney, but not in the other tissues tested.

The protein resides in the nucleus. Its subcellular location is the cytoplasm. May bind single-stranded nucleic acids. The chain is Ribonucleoprotein PTB-binding 2 (Raver2) from Mus musculus (Mouse).